A 202-amino-acid chain; its full sequence is 3-isopropylmalate dehydratase small subunit 1 (202 aa).

It belongs to the LeuD family. LeuD type 1 subfamily. In terms of assembly, heterodimer of LeuC and LeuD.

The enzyme catalyses (2R,3S)-3-isopropylmalate = (2S)-2-isopropylmalate. It participates in amino-acid biosynthesis; L-leucine biosynthesis; L-leucine from 3-methyl-2-oxobutanoate: step 2/4. Functionally, catalyzes the isomerization between 2-isopropylmalate and 3-isopropylmalate, via the formation of 2-isopropylmaleate. The polypeptide is 3-isopropylmalate dehydratase small subunit 1 (Mannheimia succiniciproducens (strain KCTC 0769BP / MBEL55E)).